The primary structure comprises 948 residues: Phosphoenolpyruvate carboxylase (948 aa).

Catalysis depends on residues His-138 and Lys-610.

The protein belongs to the PEPCase type 1 family. The cofactor is Mg(2+).

It carries out the reaction oxaloacetate + phosphate = phosphoenolpyruvate + hydrogencarbonate. Its function is as follows. Forms oxaloacetate, a four-carbon dicarboxylic acid source for the tricarboxylic acid cycle. This is Phosphoenolpyruvate carboxylase from Streptococcus sanguinis (strain SK36).